A 103-amino-acid polypeptide reads, in one-letter code: Large ribosomal subunit protein bL21 (103 aa).

Belongs to the bacterial ribosomal protein bL21 family. Part of the 50S ribosomal subunit. Contacts protein L20.

Its function is as follows. This protein binds to 23S rRNA in the presence of protein L20. In Albidiferax ferrireducens (strain ATCC BAA-621 / DSM 15236 / T118) (Rhodoferax ferrireducens), this protein is Large ribosomal subunit protein bL21.